The primary structure comprises 620 residues: Arginine--tRNA ligase (620 aa).

Residues 147–157 (ANPTGPIHIGG) carry the 'HIGH' region motif.

The protein belongs to the class-I aminoacyl-tRNA synthetase family. Monomer.

Its subcellular location is the cytoplasm. It catalyses the reaction tRNA(Arg) + L-arginine + ATP = L-arginyl-tRNA(Arg) + AMP + diphosphate. This chain is Arginine--tRNA ligase, found in Bifidobacterium longum (strain DJO10A).